Reading from the N-terminus, the 252-residue chain is MATENPQTWALWLILSEMASDMQEDKKVAKILVLGPPKAGKTTLCTFLADFMEDGDTLKKGEDSGERERKFEFEFTSVYRPTKGVRIQEFETHEFFTEQEQNELGGTRRLEDSEIQLWDVSGDKKYEDCWPAIKENAEGVILVVNPEEHKGSDLQQWFYEFVEKENIDLSCVMVILNEQGAKKTNHEQISGFEILPKLRGVHHVAHHFGSEAMQVKMEVNSFMASVLKMDQRQMGSGVDHGLGYADEQEDDF.

GTP contacts are provided by residues 35–42 (GPPKAGKT) and 118–125 (WDVSGDKK).

It belongs to the small GTPase superfamily. Rab family. Component of the IFT complex B composed of at least che-2, che-13, dyf-1, dyf-3, dyf-6, dyf-11, dyf-13, ift-20, ift-74, ift-81, ifta-2, osm-1, osm-5 and osm-6. Ciliated sensory neurons.

Its subcellular location is the cytoplasm. It localises to the cytoskeleton. It is found in the cilium axoneme. Its function is as follows. Component of the intraflagellar transport (IFT) complex B required for transport of proteins in the motile cilium. May be required for ciliary entrance and transport of specific ciliary cargo proteins such as che-3 which are related to motility. Regulates specific signaling activities in the cilia, such as the daf-2/insulin receptor-like transduction pathway. This is Intraflagellar transport associated protein 2 from Caenorhabditis elegans.